Reading from the N-terminus, the 205-residue chain is Probable molybdenum cofactor guanylyltransferase (205 aa).

Residues 9 to 11 (LAG), Lys-21, Asp-66, and Asp-95 contribute to the GTP site. Asp-95 is a binding site for Mg(2+).

It belongs to the MobA family. Requires Mg(2+) as cofactor.

It is found in the cytoplasm. The enzyme catalyses Mo-molybdopterin + GTP + H(+) = Mo-molybdopterin guanine dinucleotide + diphosphate. In terms of biological role, transfers a GMP moiety from GTP to Mo-molybdopterin (Mo-MPT) cofactor (Moco or molybdenum cofactor) to form Mo-molybdopterin guanine dinucleotide (Mo-MGD) cofactor. The polypeptide is Probable molybdenum cofactor guanylyltransferase (Pelotomaculum thermopropionicum (strain DSM 13744 / JCM 10971 / SI)).